A 98-amino-acid chain; its full sequence is Putative protein adenylyltransferase MJ0128 (98 aa).

Positions 31 to 45 (GSYARNEQTEKSDID) match the GSX(10)DXD motif motif. Mg(2+) contacts are provided by D43, D45, and D75.

The protein belongs to the MntA antitoxin family. In terms of assembly, probably forms a complex with cognate toxin MJ0127. The cofactor is Mg(2+).

The enzyme catalyses L-tyrosyl-[protein] + ATP = O-(5'-adenylyl)-L-tyrosyl-[protein] + diphosphate. It catalyses the reaction O-(5'-adenylyl)-L-tyrosyl-[protein] + ATP = O-[5'-(adenylyl-(5'-&gt;3')-adenylyl)]-L-tyrosyl-[protein] + diphosphate. In terms of biological role, probable antitoxin component of a putative type VII toxin-antitoxin (TA) system. Neutralizes cognate toxic MJ0127 by di-AMPylation. This is Putative protein adenylyltransferase MJ0128 from Methanocaldococcus jannaschii (strain ATCC 43067 / DSM 2661 / JAL-1 / JCM 10045 / NBRC 100440) (Methanococcus jannaschii).